Here is a 247-residue protein sequence, read N- to C-terminus: Homeobox-leucine zipper protein HOX17 (247 aa).

Residues 58–81 (ERAGLRGGGGSDEEDGGCGIDGSR) form a disordered region. Residues 79 to 138 (GSRKKLRLSKDQSAVLEDSFREHPTLNPRQKATLAQQLGLRPRQVEVWFQNRRARTKLKQ) constitute a DNA-binding region (homeobox). The leucine-zipper stretch occupies residues 137–182 (KQTEVDCEFLKRCCETLTEENRRLQKEVQELRALKLVSPHLYMNMS).

The protein belongs to the HD-ZIP homeobox family. Class II subfamily. Expressed in seedlings, roots, stems, leaf sheaths and blades and panicles.

The protein localises to the nucleus. Functionally, probable transcription factor. In Oryza sativa subsp. japonica (Rice), this protein is Homeobox-leucine zipper protein HOX17 (HOX17).